Reading from the N-terminus, the 275-residue chain is Autophagy protein 5 (275 aa).

M1 is modified (N-acetylmethionine). A Glycyl lysine isopeptide (Lys-Gly) (interchain with G-Cter in ATG12) cross-link involves residue K130.

The protein belongs to the ATG5 family. In terms of assembly, forms a conjugate with ATG12. Part of the minor complex composed of 4 sets of ATG12-ATG5 and ATG16L1 (400 kDa); this complex interacts with ATG3 leading to disruption of ATG7 interaction and promotion of ATG8-like proteins lipidation. Forms an 800-kDa complex composed of ATG12-ATG5 and ATG16L2. The ATG12-ATG5 conjugate interacts with RAB33A; this interaction is bridged by ATG16L1 and promotes ATG12-ATG5-ATG16L1 complex recruitment to phagophores. Interacts with TECPR1; the interaction is direct and does not take place when ATG16L1 is associated with the ATG5-ATG12 conjugate. Interacts with DHX58/RIG-1, IFIH1/MDA5 and MAVS/IPS-1 in monomeric form as well as in ATG12-ATG5 conjugate form. The interaction with MAVS is further enhanced upon vesicular stomatitis virus (VSV) infection. Interacts with ATG3. Interacts with ATG7 and ATG10. Interacts with FADD. Interacts with Bassoon/BSN; this interaction is important for the regulation of presynaptic autophagy. Interacts with ATG16L2. Conjugated to ATG12; which is essential for autophagy, but is not required for association with isolation membrane. Post-translationally, acetylated by EP300. In terms of tissue distribution, ubiquitous.

It is found in the cytoplasm. The protein resides in the preautophagosomal structure membrane. In terms of biological role, involved in autophagic vesicle formation. Conjugation with ATG12, through a ubiquitin-like conjugating system involving ATG7 as an E1-like activating enzyme and ATG10 as an E2-like conjugating enzyme, is essential for its function. The ATG12-ATG5 conjugate acts as an E3-like enzyme which is required for lipidation of ATG8 family proteins and their association to the vesicle membranes. Involved in mitochondrial quality control after oxidative damage, and in subsequent cellular longevity. Plays a critical role in multiple aspects of lymphocyte development and is essential for both B and T lymphocyte survival and proliferation. Required for optimal processing and presentation of antigens for MHC II. Involved in the maintenance of axon morphology and membrane structures, as well as in normal adipocyte differentiation. Promotes primary ciliogenesis through removal of OFD1 from centriolar satellites and degradation of IFT20 via the autophagic pathway. As part of the ATG8 conjugation system with ATG12 and ATG16L1, required for recruitment of LRRK2 to stressed lysosomes and induction of LRRK2 kinase activity in response to lysosomal stress. May play an important role in the apoptotic process, possibly within the modified cytoskeleton. Its expression is a relatively late event in the apoptotic process, occurring downstream of caspase activity. Plays a crucial role in IFN-gamma-induced autophagic cell death by interacting with FADD. Its function is as follows. (Microbial infection) May act as a proviral factor. In association with ATG12, negatively regulates the innate antiviral immune response by impairing the type I IFN production pathway upon vesicular stomatitis virus (VSV) infection. This Mus musculus (Mouse) protein is Autophagy protein 5.